Consider the following 279-residue polypeptide: uncharacterized protein (279 aa).

It belongs to the PhzF family.

This is an uncharacterized protein from Vibrio cholerae serotype O1 (strain ATCC 39315 / El Tor Inaba N16961).